Reading from the N-terminus, the 742-residue chain is Glucosylceramidase (742 aa).

2 N-linked (GlcNAc...) asparagine glycosylation sites follow: Asn-37 and Asn-160. Glu-258 serves as the catalytic Proton donor. An N-linked (GlcNAc...) asparagine glycan is attached at Asn-388. The Nucleophile role is filled by Glu-492. Residues Asn-552, Asn-560, and Asn-698 are each glycosylated (N-linked (GlcNAc...) asparagine). A helical membrane pass occupies residues 701 to 721 (IAQILVAVVILLLGVLVAYYA).

Belongs to the glycosyl hydrolase 5 (cellulase A) family.

It is found in the membrane. It catalyses the reaction a beta-D-glucosyl-(1&lt;-&gt;1')-N-acylsphing-4-enine + H2O = an N-acylsphing-4-enine + D-glucose. Its function is as follows. Specifically hydrolyzes the glucosidic linkage in glucosylceramide. May prevent accumulation of aberrent glucosylceramide containing immature ceramide. In Cryptococcus neoformans var. grubii serotype A (strain H99 / ATCC 208821 / CBS 10515 / FGSC 9487) (Filobasidiella neoformans var. grubii), this protein is Glucosylceramidase.